The chain runs to 703 residues: FERM domain-containing protein 7 (703 aa).

The FERM domain occupies 2–282 (LHLKVQFLDD…EYHAFFRLSE (281 aa)). Positions 525-552 (RNMRIKSLQQDLQELQEAMARTSGRSNI) form a coiled coil.

As to expression, in the developing cerebral cortex, strong expression is observed in the ventricular and intermediate zones at 13 and 17 dpc. At 17 dpc and P0, expression appears to be restricted to the cortical plate. In neonates, highly expressed in cortex, hippocampus, cerebellum, olfactory bulb and eye with little or no expression in liver, kidney, skeletal muscle or heart muscle (at protein level).

The protein localises to the cell projection. The protein resides in the neuron projection. It localises to the growth cone. Functionally, plays a role in neurite development, may be through the activation of the GTPase RAC1. Plays a role in the control of eye movement and gaze stability. In Mus musculus (Mouse), this protein is FERM domain-containing protein 7.